A 359-amino-acid polypeptide reads, in one-letter code: Phospho-N-acetylmuramoyl-pentapeptide-transferase (359 aa).

The next 10 membrane-spanning stretches (helical) occupy residues Gln3–Ile23, Gly53–Ile73, Gly84–Ile104, Thr117–Phe137, Ile156–Ala176, Leu187–Phe207, Leu231–Ala251, Ile255–Thr275, Val283–Phe303, and Val330–Tyr350.

It belongs to the glycosyltransferase 4 family. MraY subfamily. The cofactor is Mg(2+).

It localises to the cell membrane. The catalysed reaction is UDP-N-acetyl-alpha-D-muramoyl-L-alanyl-gamma-D-glutamyl-meso-2,6-diaminopimeloyl-D-alanyl-D-alanine + di-trans,octa-cis-undecaprenyl phosphate = di-trans,octa-cis-undecaprenyl diphospho-N-acetyl-alpha-D-muramoyl-L-alanyl-D-glutamyl-meso-2,6-diaminopimeloyl-D-alanyl-D-alanine + UMP. It functions in the pathway cell wall biogenesis; peptidoglycan biosynthesis. Its function is as follows. Catalyzes the initial step of the lipid cycle reactions in the biosynthesis of the cell wall peptidoglycan: transfers peptidoglycan precursor phospho-MurNAc-pentapeptide from UDP-MurNAc-pentapeptide onto the lipid carrier undecaprenyl phosphate, yielding undecaprenyl-pyrophosphoryl-MurNAc-pentapeptide, known as lipid I. The chain is Phospho-N-acetylmuramoyl-pentapeptide-transferase from Rhodococcus jostii (strain RHA1).